Consider the following 1035-residue polypeptide: Integrin alpha-9 (1035 aa).

The first 29 residues, 1–29 (MGGPAAPRGAGRLRALLLALVVAGIPAGA), serve as a signal peptide directing secretion. At 30-981 (YNLDPQRPVH…LEPRGYVVGW (952 aa)) the chain is on the extracellular side. FG-GAP repeat units follow at residues 35 to 96 (QRPV…PDRR), 111 to 174 (SCGK…AKGR), 182 to 232 (EYKK…NTYL), 233 to 289 (KLND…SGTL), 290 to 349 (IKIF…GALE), 351 to 408 (QLAL…GIVP), and 411 to 474 (SMKL…LPGS). Disulfide bonds link Cys87/Cys97, Cys142/Cys162, and Cys179/Cys194. An N-linked (GlcNAc...) asparagine glycan is attached at Asn225. Ca(2+)-binding residues include Asp312, Asn314, Asp316, Asp320, Asp373, Asp375, Asp377, Asp381, Asp435, Asp437, Asn439, and Asp443. An N-linked (GlcNAc...) asparagine glycan is attached at Asn476. The cysteines at positions 482 and 491 are disulfide-linked. Residue Asn493 is glycosylated (N-linked (GlcNAc...) asparagine). The cysteines at positions 497 and 555 are disulfide-linked. The N-linked (GlcNAc...) asparagine glycan is linked to Asn612. Cys620 and Cys625 are joined by a disulfide. N-linked (GlcNAc...) asparagine glycans are attached at residues Asn654, Asn658, Asn672, and Asn676. Residues Cys696 and Cys706 are joined by a disulfide bond. Residues Asn807 and Asn854 are each glycosylated (N-linked (GlcNAc...) asparagine). Disulfide bonds link Cys855–Cys891 and Cys898–Cys903. Asn904 is a glycosylation site (N-linked (GlcNAc...) asparagine). Residues 982–1002 (IIAISLLVGILIFLLLAVLLW) form a helical membrane-spanning segment. At 1003-1035 (KMGFFRRRYKEIIEAEKNRKENEDSWDWVQKNQ) the chain is on the cytoplasmic side. A GFFKR motif motif is present at residues 1005–1009 (GFFRR).

It belongs to the integrin alpha chain family. In terms of assembly, heterodimer of an alpha and a beta subunit. Alpha-9 (ITGA9) associates with beta-1 (ITGB1). Integrin ITGA9:ITGB1 interacts with FBLN5 (via N-terminus). Integrin ITGA9:ITGB1 interacts with SPP1/OPN (via N-terminus). Integrin ITGA9:ITGB1 interacts with TNC/TNFN3 (via the 3rd Fibronectin type-III domain). Integrin ITGA9:ITGB1 interacts with SVEP1/polydom (via Sushi domain 21); thereby inhibits Ca(2+) intracellular signaling and as a result represses vasocontraction. As to expression, expressed in vascular smooth muscle cells (at protein level). Expressed in the airway epithelium (at protein level).

It localises to the membrane. In terms of biological role, integrin alpha-9/beta-1 (ITGA9:ITGB1) is a receptor for VCAM1, cytotactin and osteopontin. It recognizes the sequence A-E-I-D-G-I-E-L in cytotactin. ITGA9:ITGB1 may play a crucial role in SVEP1/polydom-mediated myoblast cell adhesion. Integrin ITGA9:ITGB1 represses PRKCA-mediated L-type voltage-gated channel Ca(2+) influx and ROCK-mediated calcium sensitivity in vascular smooth muscle cells via its interaction with SVEP1, thereby inhibiting vasocontraction. The chain is Integrin alpha-9 (ITGA9) from Homo sapiens (Human).